Reading from the N-terminus, the 758-residue chain is Xaa-Pro dipeptidyl-peptidase (758 aa).

Catalysis depends on charge relay system residues Ser-349, Asp-469, and His-499.

It belongs to the peptidase S15 family. As to quaternary structure, homodimer.

It localises to the cytoplasm. The catalysed reaction is Hydrolyzes Xaa-Pro-|- bonds to release unblocked, N-terminal dipeptides from substrates including Ala-Pro-|-p-nitroanilide and (sequentially) Tyr-Pro-|-Phe-Pro-|-Gly-Pro-|-Ile.. Its function is as follows. Removes N-terminal dipeptides sequentially from polypeptides having unsubstituted N-termini provided that the penultimate residue is proline. This Streptococcus uberis (strain ATCC BAA-854 / 0140J) protein is Xaa-Pro dipeptidyl-peptidase.